The primary structure comprises 381 residues: Homoserine O-succinyltransferase (381 aa).

The AB hydrolase-1 domain maps to 45–360; that stretch reads NAVLVCHALN…PHGHDAFLLD (316 aa). The active-site Nucleophile is the S151. R221 is a substrate binding site. Residues D321 and H354 contribute to the active site. D355 lines the substrate pocket.

The protein belongs to the AB hydrolase superfamily. MetX family. In terms of assembly, homodimer.

The protein resides in the cytoplasm. The enzyme catalyses L-homoserine + succinyl-CoA = O-succinyl-L-homoserine + CoA. The protein operates within amino-acid biosynthesis; L-methionine biosynthesis via de novo pathway; O-succinyl-L-homoserine from L-homoserine: step 1/1. Functionally, transfers a succinyl group from succinyl-CoA to L-homoserine, forming succinyl-L-homoserine. In Burkholderia thailandensis (strain ATCC 700388 / DSM 13276 / CCUG 48851 / CIP 106301 / E264), this protein is Homoserine O-succinyltransferase.